Consider the following 507-residue polypeptide: Chromosomal replication initiator protein DnaA (507 aa).

The segment at 1 to 72 is domain I, interacts with DnaA modulators; that stretch reads MNNYNKIWEI…KKITKLKFEE (72 aa). The tract at residues 72–162 is domain II; the sequence is EKIIIEFVSE…KISFNKYNYG (91 aa). Positions 163–384 are domain III, AAA+ region; sequence NTNPKYSFDN…GALLRLLNYA (222 aa). The ATP site is built by G207, G209, K210, and T211. Residues 385-507 are domain IV, binds dsDNA; the sequence is QTFGYDIDIN…LELILKKINS (123 aa).

It belongs to the DnaA family. Oligomerizes as a right-handed, spiral filament on DNA at oriC.

The protein resides in the cytoplasm. In terms of biological role, plays an essential role in the initiation and regulation of chromosomal replication. ATP-DnaA binds to the origin of replication (oriC) to initiate formation of the DNA replication initiation complex once per cell cycle. Binds the DnaA box (a 9 base pair repeat at the origin) and separates the double-stranded (ds)DNA. Forms a right-handed helical filament on oriC DNA; dsDNA binds to the exterior of the filament while single-stranded (ss)DNA is stabiized in the filament's interior. The ATP-DnaA-oriC complex binds and stabilizes one strand of the AT-rich DNA unwinding element (DUE), permitting loading of DNA polymerase. After initiation quickly degrades to an ADP-DnaA complex that is not apt for DNA replication. Binds acidic phospholipids. This is Chromosomal replication initiator protein DnaA from Onion yellows phytoplasma (strain OY-M).